The following is a 299-amino-acid chain: Tetrahydromethanopterin S-methyltransferase subunit E (299 aa).

6 helical membrane passes run 57-79 (AISGEPVSYGLYVAVAGTIAWAL), 89-111 (AIIVGAGVAAIVHGAYSVSAFLG), 132-154 (HIGPIVGHGFIAVFTMTLAAYLA), 164-183 (LPLVSLIFGITVGAIGSSTG), 227-246 (FCSRFGGPLTGLCFGLIIFL), and 261-283 (LVTKTSIALLVGLLVVAVAAVIN).

Belongs to the MtrE family. In terms of assembly, the complex is composed of 8 subunits; MtrA, MtrB, MtrC, MtrD, MtrE, MtrF, MtrG and MtrH.

It localises to the cell membrane. It carries out the reaction 5-methyl-5,6,7,8-tetrahydromethanopterin + coenzyme M + 2 Na(+)(in) = 5,6,7,8-tetrahydromethanopterin + methyl-coenzyme M + 2 Na(+)(out). Its pathway is one-carbon metabolism; methanogenesis from CO(2); methyl-coenzyme M from 5,10-methylene-5,6,7,8-tetrahydromethanopterin: step 2/2. Functionally, part of a complex that catalyzes the formation of methyl-coenzyme M and tetrahydromethanopterin from coenzyme M and methyl-tetrahydromethanopterin. This is an energy-conserving, sodium-ion translocating step. This is Tetrahydromethanopterin S-methyltransferase subunit E from Methanococcus maripaludis (strain DSM 14266 / JCM 13030 / NBRC 101832 / S2 / LL).